Here is a 471-residue protein sequence, read N- to C-terminus: Meiosis-specific with OB domain-containing protein (471 aa).

Positions 167–272 (IINVLAAVKS…EANILLNFIR (106 aa)) form a DNA-binding region, OB.

The protein belongs to the MEIOB family. Component of a multiprotein complex with RPA2 and SPATA22. Interacts with SPATA22. Interacts with the complex BRME1:HSF2BP:BRCA2.

The protein localises to the cytoplasm. It localises to the nucleus. It is found in the chromosome. Functionally, single-stranded DNA-binding protein required for homologous recombination in meiosis I. Required for double strand breaks (DSBs) repair and crossover formation and promotion of faithful and complete synapsis. Not required for the initial loading of recombinases but required to maintain a proper number of RAD51 and DMC1 foci after the zygotene stage. May act by ensuring the stabilization of recombinases, which is required for successful homology search and meiotic recombination. Displays Single-stranded DNA 3'-5' exonuclease activity in vitro. The sequence is that of Meiosis-specific with OB domain-containing protein (MEIOB) from Macaca fascicularis (Crab-eating macaque).